The following is a 107-amino-acid chain: uncharacterized protein (107 aa).

Transmembrane regions (helical) follow at residues 15 to 35 (TGSYNWFDHFFLCVYLALGIS), 43 to 63 (LYRVCFIFLFTGGFFLFWLSY), and 87 to 107 (YFPSSTWIAVLVFSWRHIFCF).

Its subcellular location is the membrane. This is an uncharacterized protein from Saccharomyces cerevisiae (strain ATCC 204508 / S288c) (Baker's yeast).